The primary structure comprises 231 residues: Equistatin (231 aa).

A signal peptide spans 1–32; sequence MALSQNQAKFSKGFVVMIWVLFIACAITSTEA. 3 Thyroglobulin type-1 domains span residues 34–95, 102–163, and 167–231; these read LTKC…SPDC, LTLC…RPTC, and LSEC…RPTC. Cystine bridges form between C37–C56, C67–C74, C76–C95, C105–C124, C135–C142, C144–C163, C170–C191, C202–C209, and C211–C231.

This sequence belongs to the protease inhibitor I31 family.

The protein resides in the secreted. In terms of biological role, potent inhibitor of papain-like cysteine proteinases (Ki=0.18-0.57 nM on papain), as well as of the aspartic proteinase cathepsin D (Ki=0.3-05 nM). In Actinia equina (Beadlet anemone), this protein is Equistatin.